The following is a 187-amino-acid chain: Large ribosomal subunit protein uL6 (187 aa).

The protein belongs to the universal ribosomal protein uL6 family. As to quaternary structure, part of the 50S ribosomal subunit.

In terms of biological role, this protein binds to the 23S rRNA, and is important in its secondary structure. It is located near the subunit interface in the base of the L7/L12 stalk, and near the tRNA binding site of the peptidyltransferase center. The polypeptide is Large ribosomal subunit protein uL6 (Roseiflexus castenholzii (strain DSM 13941 / HLO8)).